The chain runs to 1146 residues: Myosin heavy chain kinase A (1146 aa).

The interval 1–25 is disordered; sequence MFNIKKRKESITGIPPINVNSPQSV. The stretch at 100–120 forms a coiled coil; the sequence is EQMEDQLEKTMKVVRNHTDSL. Positions 158–191 are disordered; that stretch reads IQEKKSTSSPLVKGGISGGGGSGGDDSFDGANIS. Positions 172–181 are enriched in gly residues; sequence GISGGGGSGG. Coiled coils occupy residues 187–241 and 297–502; these read GANI…KRIE and SKIE…ASIS. The segment at 500–551 is pseudosubstrate/autoinhibitory domain; it reads SISPISSVPKSPITTKRSSIILNSPPMTSQQSSPKIQDLLSSSGSSSVSGIN. The span at 521–534 shows a compositional bias: polar residues; that stretch reads LNSPPMTSQQSSPK. The interval 521–540 is disordered; it reads LNSPPMTSQQSSPKIQDLLS. Residues 552–852 are catalytic; sequence ISSETGEMGI…KVGAKQLPKA (301 aa). Positions 564–808 constitute an Alpha-type protein kinase domain; that stretch reads EFDPIINKWI…VCALLDLDVK (245 aa). Residue 778-783 coordinates ATP; it reads GLGNLG. WD repeat units follow at residues 867 to 897, 910 to 938, 952 to 980, 993 to 1021, 1033 to 1061, 1073 to 1101, and 1114 to 1142; these read SFRERVNSIAFFDNQKLLCAGYGDGTYRVFD, GHRKSIESIACNSNYIFTSSPDNTIKVHI, GHTGEVNCVVANEKYLFSCSYDKTIKVWD, VHTKYIKTLALSGRYLFSGGNDQIIYVWD, GHEDWVLSLHCTASYLFSTSKDNVIKIWD, GHWNSVSSCVVKDRYLYSGSEDNSIKVWD, and SHSLGVKCLMVFNNQIISAAFDGSIKVWE.

This sequence belongs to the protein kinase superfamily. Alpha-type protein kinase family. ALPK subfamily. In terms of assembly, oligomer. It depends on Mg(2+) as a cofactor. Mn(2+) serves as cofactor. In terms of processing, the N-terminus is blocked.

The enzyme catalyses L-threonyl-[myosin heavy-chain] + ATP = O-phospho-L-threonyl-[myosin heavy-chain] + ADP + H(+). Functionally, catalyzes its autophosphorylation, which is needed for enzymatic activity and phosphorylates myosin II heavy chain at a threonine in the C-terminal tail region. This phosphorylation is critical for regulating the assembly and disassembly of myosin II filament, affecting myosin localization during an array of cellular contractile events, including cytokinesis and capping of cell surface receptors as well as chemotactic cell locomotion. The polypeptide is Myosin heavy chain kinase A (mhkA) (Dictyostelium discoideum (Social amoeba)).